We begin with the raw amino-acid sequence, 295 residues long: Protease HtpX (295 aa).

2 helical membrane passes run 4 to 24 (ILLFLATNLAVVLIASITLSL) and 41 to 61 (SQLLVFCAVFGFAGSLFSLFI). H147 lines the Zn(2+) pocket. Residue E148 is part of the active site. H151 lines the Zn(2+) pocket. The next 2 helical transmembrane spans lie at 158 to 178 (VTLALIQGVVNTFVMFFARII) and 199 to 219 (IATIFAELVLGILASAIVMWF). E224 lines the Zn(2+) pocket.

This sequence belongs to the peptidase M48B family. The cofactor is Zn(2+).

Its subcellular location is the cell inner membrane. The polypeptide is Protease HtpX (Pseudomonas fluorescens (strain Pf0-1)).